Reading from the N-terminus, the 468-residue chain is Cysteine--tRNA ligase (468 aa).

Cys-33 lines the Zn(2+) pocket. Residues 35–45 (ATVQGLPHIGH) carry the 'HIGH' region motif. Positions 211, 236, and 240 each coordinate Zn(2+). The 'KMSKS' region motif lies at 267 to 271 (KMSKS). Lys-270 lines the ATP pocket.

This sequence belongs to the class-I aminoacyl-tRNA synthetase family. As to quaternary structure, monomer. Requires Zn(2+) as cofactor.

It is found in the cytoplasm. The enzyme catalyses tRNA(Cys) + L-cysteine + ATP = L-cysteinyl-tRNA(Cys) + AMP + diphosphate. This chain is Cysteine--tRNA ligase, found in Mycobacterium ulcerans (strain Agy99).